Consider the following 417-residue polypeptide: MSNSGRLVLRPWIRELILGSETLSSPQAGHLLKVLQDSETPGPSSAPDTPDTGAVLLVSDGTHSVRCVVTRNAIDTSDWEEKEFGFRGTEGRLLLLQACGLRIQVAQDYAPAEFYLQVDRFNLLPTEQPRVQVTGCNQDSDVQKKLNKCLEDHLSESASSSAGLTLSQLLDEVKEDGDHRGALVRLAESCLVLQGPFTARPLTHWATSCSQATEEAVFTVPSFLLHISENEEQILSSIDSSQKAQENPASPSLMPQEESGASVSLLSALPTSDPGQKDNSQPPPTVCSTSPRAQAPSSTPCSSTPSSPLLTCSPSLSPLRHAPTSYQACETRTQFHKLEFRELQWPIKRRQLLPRTGAQEPHSVWEPPERHRDTSAFQYKYGTPSASLHTQVQTARLSPQLVAWALNIVMESELPQV.

A PWI motif is present at residues 11 to 13 (PWI). Residue Ser25 is modified to Phosphoserine. The interval 156–245 (ESASSSAGLT…SSIDSSQKAQ (90 aa)) is interaction with POT1. Polar residues-rich tracts occupy residues 237 to 250 (SIDSSQKAQENPAS) and 259 to 292 (SGASVSLLSALPTSDPGQKDNSQPPPTVCSTSPR). The tract at residues 237–309 (SIDSSQKAQE…PCSSTPSSPL (73 aa)) is disordered. Over residues 296-309 (PSSTPCSSTPSSPL) the composition is skewed to low complexity. 2 positions are modified to phosphoserine: Ser313 and Ser317. Lys348 is covalently cross-linked (Glycyl lysine isopeptide (Lys-Gly) (interchain with G-Cter in SUMO2)).

As to quaternary structure, component of the shelterin complex (telosome) composed of TERF1, TERF2, TINF2, TERF2IP ACD and POT1. Forms heterodimers with POT1. Identified in a complex with POT1 and single-stranded telomeric DNA. Interacts with STN1 and TINF2.

The protein localises to the nucleus. It localises to the chromosome. It is found in the telomere. Component of the shelterin complex (telosome) that is involved in the regulation of telomere length and protection. Shelterin associates with arrays of double-stranded TTAGGG repeats added by telomerase and protects chromosome ends. Without its protective activity, telomeres are no longer hidden from the DNA damage surveillance and chromosome ends are inappropriately processed by DNA repair pathways. Promotes binding of POT1 to single-stranded telomeric DNA. Modulates the inhibitory effects of POT1 on telomere elongation. The ACD-POT1 heterodimer enhances telomere elongation by recruiting telomerase to telomeres and increasing its processivity. May play a role in organogenesis. This is Adrenocortical dysplasia protein homolog from Rattus norvegicus (Rat).